We begin with the raw amino-acid sequence, 1333 residues long: ABC transporter ATP-binding protein/permease PDR18 (1333 aa).

The helical transmembrane segment at 13 to 33 threads the bilayer; sequence FLEGQTFGDILCLPWTIIKGI. The ABC transporter 1 domain occupies 30 to 281; that stretch reads IKGIRERKNR…FENMGYLCPP (252 aa). N-linked (GlcNAc...) asparagine glycosylation is found at asparagine 48, asparagine 144, asparagine 205, and asparagine 350. The next 6 helical transmembrane spans lie at 392 to 412, 425 to 445, 474 to 494, 499 to 519, 534 to 554, and 642 to 662; these read YTVINTCAAIAQAFITGSLFY, SGVLFFSLLYYSLMGLANISF, FPFRMIGLTFFIIILYFLAGL, GAFFTMYLLLTMCSEAITSLF, SIAGVVMLSIAMYSTYMIQLP, and FGIMWCFLIGYIVLRAVFTEY. Residues asparagine 697 and asparagine 733 are each glycosylated (N-linked (GlcNAc...) asparagine). The 243-residue stretch at 729–971 folds into the ABC transporter 2 domain; it reads FIWKNVSFTI…VIKYFEKNGA (243 aa). Residue 765-772 participates in ATP binding; the sequence is GESGAGKT. An N-linked (GlcNAc...) asparagine glycan is attached at asparagine 958. Helical transmembrane passes span 1071–1091, 1092–1112, 1150–1170, 1178–1198, 1210–1230, and 1235–1255; these read LLMISGLFIGFTFFHVGVNAI, GLQNSLFACFMAIVISAPATN, PYHLLFSTIFFVSSYFPLGVF, VFYLNYAILFQLYYIGLALMI, VIVGFILSFLLSFCGAVQPAS, and FWTFMWKLSPYTYFLQNLVGL. Asparagine 1320 carries an N-linked (GlcNAc...) asparagine glycan.

Belongs to the ABC transporter superfamily. ABCG family. PDR (TC 3.A.1.205) subfamily.

It is found in the membrane. This chain is ABC transporter ATP-binding protein/permease PDR18 (PDR18), found in Saccharomyces cerevisiae (strain ATCC 204508 / S288c) (Baker's yeast).